We begin with the raw amino-acid sequence, 153 residues long: MTDQALQTLVEKISIVFFQKPFLHQATFNRRLKTTGGRYHLASHHLDFNPTVFLKYGQEELEKVIKHELCHYHLHLAGKGYQHKDKDFKELLAKTGGARYAPPLVERKKAVFHQYQCQSCGEVILRKRRIDTTRYVCGKCHGRLSWQAKKEQI.

One can recognise a SprT-like domain in the interval 7-145 (QTLVEKISIV…VCGKCHGRLS (139 aa)). Zn(2+) is bound at residue His-67. Residue Glu-68 is part of the active site. His-71 is a binding site for Zn(2+).

It belongs to the SprT family. Zn(2+) serves as cofactor.

The protein localises to the cytoplasm. The polypeptide is Protein SprT-like (Enterococcus faecalis (strain ATCC 700802 / V583)).